The chain runs to 459 residues: Smoothelin-like protein 1 (459 aa).

Polar residues predominate over residues 1 to 27 (MEQTEGNSSEDGTTVSPTAGNLETPGS). Positions 1–314 (MEQTEGNSSE…RPRGPRAQNR (314 aa)) are disordered. Composition is skewed to basic and acidic residues over residues 42 to 55 (SDKE…EHLC), 75 to 105 (DELK…KEDT), 112 to 168 (DTGK…KEDA), 185 to 211 (ADVK…KELV), and 221 to 232 (EQGKENESEERA). Positions 124-154 (NEVREKEEAMLASEKQKVDEKETNLESKEKS) form a coiled coil. The segment covering 260 to 283 (PESTGETSPSASESSPSEVPGSPT) has biased composition (low complexity). Basic and acidic residues predominate over residues 287 to 300 (PSEKKKDRAPERRV). The residue at position 301 (Ser-301) is a Phosphoserine; by PKA and PKG. In terms of domain architecture, Calponin-homology (CH) spans 343–449 (GGVKNMLLEW…YIQELYRSLV (107 aa)). The segment at 441 to 459 (IQELYRSLVQKGLVKTKKK) is calmodulin-binding.

The protein belongs to the smoothelin family. In terms of assembly, interacts with PPP1R12A. Maximal phosphorylation of Ser-301 correlates with maximal relaxation of aorta in response to acetylcholine. In terms of tissue distribution, widely expressed, with highest expression in skeletal muscles (at protein level). Within striated muscles, significantly more expressed in soleus muscle compared with plantaris muscle or white vastus (at protein level). 30-40% lower expression in females than in males (at protein level). Expressed in type 2a fibers, but not detected in fast twitch type 2b muscle white vastus nor in oxidative type I/b heart muscle (at protein level). Expressed within myometrial cells of the uterus, as well as in the endometrial layer. In the aorta, confined to smooth muscle cells. Not detected in endothelial cells.

The protein resides in the cytoplasm. The protein localises to the myofibril. It localises to the sarcomere. Its subcellular location is the i band. It is found in the m line. The protein resides in the nucleus. Its function is as follows. Plays a role in the regulation of contractile properties of both striated and smooth muscles. When unphosphorylated, may inhibit myosin dephosphorylation. Phosphorylation at Ser-301 reduces this inhibitory activity. This chain is Smoothelin-like protein 1 (Smtnl1), found in Mus musculus (Mouse).